A 233-amino-acid chain; its full sequence is Ribose-5-phosphate isomerase A (233 aa).

Substrate is bound by residues 31–34, 87–90, and 100–103; these read SGST, DGAD, and KGGG. Glu109 serves as the catalytic Proton acceptor. Lys127 lines the substrate pocket.

Belongs to the ribose 5-phosphate isomerase family. Homodimer.

The enzyme catalyses aldehydo-D-ribose 5-phosphate = D-ribulose 5-phosphate. It functions in the pathway carbohydrate degradation; pentose phosphate pathway; D-ribose 5-phosphate from D-ribulose 5-phosphate (non-oxidative stage): step 1/1. Catalyzes the reversible conversion of ribose-5-phosphate to ribulose 5-phosphate. The chain is Ribose-5-phosphate isomerase A from Chlamydia caviae (strain ATCC VR-813 / DSM 19441 / 03DC25 / GPIC) (Chlamydophila caviae).